Reading from the N-terminus, the 373-residue chain is Chaperone protein DnaJ (373 aa).

The region spanning 4–69 is the J domain; the sequence is NYYEILEISQ…EKRSIYDRYG (66 aa). The CR-type zinc-finger motif lies at 133-210; sequence GCKKKIDFSY…CHGNGYEEIK (78 aa). Residues cysteine 146, cysteine 149, cysteine 162, cysteine 165, cysteine 184, cysteine 187, cysteine 198, and cysteine 201 each coordinate Zn(2+). CXXCXGXG motif repeat units follow at residues 146-153, 162-169, 184-191, and 198-205; these read CKSCKGSG, CPHCGGKG, CDHCKGSG, and CKTCHGNG.

This sequence belongs to the DnaJ family. Homodimer. Zn(2+) is required as a cofactor.

Its subcellular location is the cytoplasm. Its function is as follows. Participates actively in the response to hyperosmotic and heat shock by preventing the aggregation of stress-denatured proteins and by disaggregating proteins, also in an autonomous, DnaK-independent fashion. Unfolded proteins bind initially to DnaJ; upon interaction with the DnaJ-bound protein, DnaK hydrolyzes its bound ATP, resulting in the formation of a stable complex. GrpE releases ADP from DnaK; ATP binding to DnaK triggers the release of the substrate protein, thus completing the reaction cycle. Several rounds of ATP-dependent interactions between DnaJ, DnaK and GrpE are required for fully efficient folding. Also involved, together with DnaK and GrpE, in the DNA replication of plasmids through activation of initiation proteins. The polypeptide is Chaperone protein DnaJ (Campylobacter lari (strain RM2100 / D67 / ATCC BAA-1060)).